The sequence spans 554 residues: Probable ATP-binding cassette sub-family F member 3 homolog (554 aa).

ABC transporter domains are found at residues 89-285 (GDLH…ASAR) and 351-554 (IEFV…GLGV). Residues 122 to 129 (GRNGIGKT) and 383 to 390 (GANGQGKS) contribute to the ATP site.

Belongs to the ABC transporter superfamily. ABCF family. EF3 subfamily.

This Encephalitozoon cuniculi (strain GB-M1) (Microsporidian parasite) protein is Probable ATP-binding cassette sub-family F member 3 homolog.